Consider the following 700-residue polypeptide: Auxin response factor 18 (700 aa).

The segment at residues 128 to 230 is a DNA-binding region (TF-B3); that stretch reads FAKTLTQSDA…DLCVGIRRAK (103 aa). Disordered regions lie at residues 234-254 and 560-595; these read VGGPEFLPPPPPPPPTPAAGG and VKKSSSDGNAENTVNKSNSDVSSPRSNQNGTTDNLS. Over residues 239–250 the composition is skewed to pro residues; it reads FLPPPPPPPPTP. Over residues 565-594 the composition is skewed to polar residues; that stretch reads SDGNAENTVNKSNSDVSSPRSNQNGTTDNL. A PB1 domain is found at 614-697; that stretch reads TGHCKVFMQS…NILTDTSGDN (84 aa).

It belongs to the ARF family. In terms of assembly, homodimers and heterodimers. As to expression, expressed in roots, culms, leaves and young panicles.

Its subcellular location is the nucleus. In terms of biological role, auxin response factors (ARFs) are transcriptional factors that bind specifically to the DNA sequence 5'-TGTCTC-3' found in the auxin-responsive promoter elements (AuxREs). In Oryza sativa subsp. japonica (Rice), this protein is Auxin response factor 18 (ARF18).